A 286-amino-acid polypeptide reads, in one-letter code: tRNA (guanine-N(7)-)-methyltransferase (286 aa).

Residues Gly-103, 126–127 (EI), 161–162 (NA), and Cys-181 each bind S-adenosyl-L-methionine. Asp-184 is a catalytic residue. Residue 259–261 (TEE) participates in S-adenosyl-L-methionine binding.

This sequence belongs to the class I-like SAM-binding methyltransferase superfamily. TrmB family. Forms a complex with TRM82.

It is found in the nucleus. The enzyme catalyses guanosine(46) in tRNA + S-adenosyl-L-methionine = N(7)-methylguanosine(46) in tRNA + S-adenosyl-L-homocysteine. It functions in the pathway tRNA modification; N(7)-methylguanine-tRNA biosynthesis. In terms of biological role, catalyzes the formation of N(7)-methylguanine at position 46 (m7G46) in tRNA. The chain is tRNA (guanine-N(7)-)-methyltransferase from Vanderwaltozyma polyspora (strain ATCC 22028 / DSM 70294 / BCRC 21397 / CBS 2163 / NBRC 10782 / NRRL Y-8283 / UCD 57-17) (Kluyveromyces polysporus).